We begin with the raw amino-acid sequence, 301 residues long: Probable alpha-L-glutamate ligase (301 aa).

One can recognise an ATP-grasp domain in the interval 104-287 (TQLLARKGIG…IAGTIYAFLE (184 aa)). Residues Lys-141, 178 to 179 (EY), Asp-187, and 211 to 213 (RSN) contribute to the ATP site. Positions 248, 260, and 262 each coordinate Mg(2+). Residues Asp-248, Glu-260, and Asn-262 each coordinate Mn(2+).

Belongs to the RimK family. Requires Mg(2+) as cofactor. The cofactor is Mn(2+).

In Alkalilimnicola ehrlichii (strain ATCC BAA-1101 / DSM 17681 / MLHE-1), this protein is Probable alpha-L-glutamate ligase.